The sequence spans 98 residues: NADH-ubiquinone oxidoreductase chain 4L (98 aa).

3 consecutive transmembrane segments (helical) span residues P2–F22, S29–L49, and I61–V81.

Belongs to the complex I subunit 4L family. In terms of assembly, core subunit of respiratory chain NADH dehydrogenase (Complex I) which is composed of 45 different subunits.

The protein resides in the mitochondrion inner membrane. The catalysed reaction is a ubiquinone + NADH + 5 H(+)(in) = a ubiquinol + NAD(+) + 4 H(+)(out). In terms of biological role, core subunit of the mitochondrial membrane respiratory chain NADH dehydrogenase (Complex I) which catalyzes electron transfer from NADH through the respiratory chain, using ubiquinone as an electron acceptor. Part of the enzyme membrane arm which is embedded in the lipid bilayer and involved in proton translocation. In Microcebus simmonsi (Simmons's mouse lemur), this protein is NADH-ubiquinone oxidoreductase chain 4L (MT-ND4L).